Here is a 376-residue protein sequence, read N- to C-terminus: Cyclin-D3-1 (376 aa).

The disordered stretch occupies residues 298–376; the sequence is KRKSHDSSSS…HLPWAIVATP (79 aa). A compositionally biased stretch (low complexity) spans 321 to 349; that stretch reads NSDESSNDSWSASSCNPPTSSSSPQQQPP. Residues 354-363 show a composition bias toward basic and acidic residues; that stretch reads RGAEENEKKK.

Belongs to the cyclin family. Cyclin D subfamily. In terms of assembly, interacts with the C-terminal domain of CDKA-1. Interacts with KRP1/ICK1. Interacts with KRP6. Post-translationally, phosphorylated. In terms of tissue distribution, highly expressed in roots and at lower levels in leaves and flowers. Expressed in vegetative shoot meristem and inflorescence.

Functionally, involved in the control of the cell cycle at the G1/S (start) transition. Activates the G1/S phase transition in response to cytokinin hormone signal, but declines in response to sucrose starvation leading to G1 arrest. Involved in the induction of mitotic cell division. Plays an important role in the switch from cell proliferation to the final stages of differentiation during plant development. May not be involved in the activation of cell cycle in the root apical meristem (RAM) in the early phase of seed germination. Promotes divisions in the guard cells (GCs) after the guard mother cells (GMC) symmetric division. The polypeptide is Cyclin-D3-1 (CYCD3-1) (Arabidopsis thaliana (Mouse-ear cress)).